Consider the following 472-residue polypeptide: uncharacterized protein (472 aa).

The next 14 membrane-spanning stretches (helical) occupy residues 14–34 (VIVG…TLLI), 53–73 (WLTT…AFLI), 80–100 (ALLI…AFAP), 113–133 (AAGA…IFPI), 142–162 (MVGL…GWAV), 169–189 (SLFY…SILM), 202–222 (ILSV…FSSV), 227–247 (WSSS…LLFI), 263–283 (FTFG…ALLI), 302–322 (FDTG…SPII), 333–353 (GLAI…MQLT), 359–379 (AWIV…MMPV), 405–427 (VGGS…HAGT), and 437–457 (GMNA…LLSF).

Belongs to the major facilitator superfamily. EmrB family.

The protein resides in the cell membrane. This is an uncharacterized protein from Bacillus subtilis (strain 168).